The chain runs to 171 residues: Neudesin (171 aa).

Residues 1–30 (MARPAPWWWLRPLAALALALALVRVPSARA) form the signal peptide. The region spanning 43-128 (VRLFTEEELA…KELEALDDIF (86 aa)) is the Cytochrome b5 heme-binding domain. Lys135 bears the N6-acetyllysine mark. Positions 151–171 (GSPNLDFKPEDQPHFDIKDEF) are disordered. The span at 157-171 (FKPEDQPHFDIKDEF) shows a compositional bias: basic and acidic residues.

The protein belongs to the cytochrome b5 family. MAPR subfamily. As to quaternary structure, interacts with PINK1 and PARK7.

The protein localises to the secreted. It is found in the extracellular space. The protein resides in the mitochondrion. It localises to the endoplasmic reticulum. In terms of biological role, acts as a neurotrophic factor in postnatal mature neurons enhancing neuronal survival. Promotes cell proliferation and neurogenesis in undifferentiated neural progenitor cells at the embryonic stage and inhibits differentiation of astrocytes. Its neurotrophic activity is exerted via MAPK1/ERK2, MAPK3/ERK1 and AKT1/AKT pathways. Neurotrophic activity is enhanced by binding to heme. Also acts as an anorexigenic neurotrophic factor that contributes to energy balance. The protein is Neudesin of Rattus norvegicus (Rat).